The sequence spans 775 residues: Metal transporter CNNM4 (775 aa).

The Extracellular segment spans residues 1-178 (MAPVGGGGRP…LLFMVEEPGR (178 aa)). N-linked (GlcNAc...) asparagine glycans are attached at residues Asn85 and Asn122. In terms of domain architecture, CNNM transmembrane spans 178–358 (RFLPLWLHIL…EPYNDLVKEE (181 aa)). The helical transmembrane segment at 179–199 (FLPLWLHILLITVLLVLSGIF) threads the bilayer. The Cytoplasmic segment spans residues 200-240 (SGLNLGLMALDPMELRIVQNCGTEKERRYARKIEPIRRKGN). An intramembrane region (helical) is located at residues 241–261 (YLLCSLLLGNVLVNTSLTILL). Over 262-264 (DNL) the chain is Cytoplasmic. A helical membrane pass occupies residues 265–285 (IGSGLMAVASSTIGIVIFGEI). Over 286 to 293 (LPQALCSR) the chain is Extracellular. A helical membrane pass occupies residues 294 to 316 (HGLAVGANTILLTKFFMLLTFPL). The Cytoplasmic segment spans residues 317-775 (SFPISKLLDF…LHKASHENAI (459 aa)). 2 consecutive CBS domains span residues 377 to 438 (MTQL…CTPL) and 445 to 511 (YNHP…ILDE). Residues Ser660, Ser664, and Ser770 each carry the phosphoserine modification.

This sequence belongs to the ACDP family. Interacts with COX11. As to expression, widely expressed. Highly expressed in heart.

Its subcellular location is the cell membrane. Its function is as follows. Probable metal transporter. The interaction with the metal ion chaperone COX11 suggests that it may play a role in sensory neuron functions. May play a role in biomineralization and retinal function. This is Metal transporter CNNM4 (CNNM4) from Homo sapiens (Human).